A 241-amino-acid chain; its full sequence is Pyridoxine 5'-phosphate synthase (241 aa).

Residue Asn-7 participates in 3-amino-2-oxopropyl phosphate binding. 9–10 (DH) lines the 1-deoxy-D-xylulose 5-phosphate pocket. A 3-amino-2-oxopropyl phosphate-binding site is contributed by Arg-18. His-43 (proton acceptor) is an active-site residue. 1-deoxy-D-xylulose 5-phosphate contacts are provided by Arg-45 and His-50. Glu-70 (proton acceptor) is an active-site residue. Thr-100 is a binding site for 1-deoxy-D-xylulose 5-phosphate. His-191 functions as the Proton donor in the catalytic mechanism. 3-amino-2-oxopropyl phosphate contacts are provided by residues Gly-192 and 213–214 (GH).

The protein belongs to the PNP synthase family. Homooctamer; tetramer of dimers.

The protein localises to the cytoplasm. The enzyme catalyses 3-amino-2-oxopropyl phosphate + 1-deoxy-D-xylulose 5-phosphate = pyridoxine 5'-phosphate + phosphate + 2 H2O + H(+). Its pathway is cofactor biosynthesis; pyridoxine 5'-phosphate biosynthesis; pyridoxine 5'-phosphate from D-erythrose 4-phosphate: step 5/5. Functionally, catalyzes the complicated ring closure reaction between the two acyclic compounds 1-deoxy-D-xylulose-5-phosphate (DXP) and 3-amino-2-oxopropyl phosphate (1-amino-acetone-3-phosphate or AAP) to form pyridoxine 5'-phosphate (PNP) and inorganic phosphate. This chain is Pyridoxine 5'-phosphate synthase, found in Solidesulfovibrio magneticus (strain ATCC 700980 / DSM 13731 / RS-1) (Desulfovibrio magneticus).